The sequence spans 155 residues: Ribosomal RNA large subunit methyltransferase H (155 aa).

Residues Leu72, Gly103, and 122–127 (LSPLTL) each bind S-adenosyl-L-methionine.

It belongs to the RNA methyltransferase RlmH family. As to quaternary structure, homodimer.

It is found in the cytoplasm. It carries out the reaction pseudouridine(1915) in 23S rRNA + S-adenosyl-L-methionine = N(3)-methylpseudouridine(1915) in 23S rRNA + S-adenosyl-L-homocysteine + H(+). In terms of biological role, specifically methylates the pseudouridine at position 1915 (m3Psi1915) in 23S rRNA. This chain is Ribosomal RNA large subunit methyltransferase H, found in Aeromonas salmonicida (strain A449).